The primary structure comprises 264 residues: Thymidylate synthase (264 aa).

R21 provides a ligand contact to dUMP. Position 51 (H51) interacts with (6R)-5,10-methylene-5,6,7,8-tetrahydrofolate. 126–127 (RR) provides a ligand contact to dUMP. The Nucleophile role is filled by C146. DUMP-binding positions include 166–169 (RSAD), N177, and 207–209 (HLY). Residue D169 coordinates (6R)-5,10-methylene-5,6,7,8-tetrahydrofolate. A263 serves as a coordination point for (6R)-5,10-methylene-5,6,7,8-tetrahydrofolate.

It belongs to the thymidylate synthase family. Bacterial-type ThyA subfamily. Homodimer.

It localises to the cytoplasm. The catalysed reaction is dUMP + (6R)-5,10-methylene-5,6,7,8-tetrahydrofolate = 7,8-dihydrofolate + dTMP. The protein operates within pyrimidine metabolism; dTTP biosynthesis. Its function is as follows. Catalyzes the reductive methylation of 2'-deoxyuridine-5'-monophosphate (dUMP) to 2'-deoxythymidine-5'-monophosphate (dTMP) while utilizing 5,10-methylenetetrahydrofolate (mTHF) as the methyl donor and reductant in the reaction, yielding dihydrofolate (DHF) as a by-product. This enzymatic reaction provides an intracellular de novo source of dTMP, an essential precursor for DNA biosynthesis. The chain is Thymidylate synthase from Legionella pneumophila subsp. pneumophila (strain Philadelphia 1 / ATCC 33152 / DSM 7513).